We begin with the raw amino-acid sequence, 361 residues long: Peptide chain release factor 1 (361 aa).

Position 237 is an N5-methylglutamine (Gln237). The segment covering 287-297 (KQQKEQSDTRK) has biased composition (basic and acidic residues). Residues 287-307 (KQQKEQSDTRKNLVGSGDRSE) are disordered.

The protein belongs to the prokaryotic/mitochondrial release factor family. In terms of processing, methylated by PrmC. Methylation increases the termination efficiency of RF1.

It localises to the cytoplasm. Peptide chain release factor 1 directs the termination of translation in response to the peptide chain termination codons UAG and UAA. This is Peptide chain release factor 1 from Francisella philomiragia subsp. philomiragia (strain ATCC 25017 / CCUG 19701 / FSC 153 / O#319-036).